Consider the following 131-residue polypeptide: CDGSH iron-sulfur domain-containing protein 2 homolog A (131 aa).

Topologically, residues 1–35 are lumenal; it reads MEFLSKIVRVHIPDYLNSVPVPDSFGGFLDLTAGQ. A helical transmembrane segment spans residues 36–58; it reads WLHLFAFSGTVAAAVYMSVKPYL. The Cytoplasmic segment spans residues 59–131; that stretch reads DKKDQKDQLV…GPLVLKRKDV (73 aa). [2Fe-2S] cluster contacts are provided by Cys95, Cys97, Cys106, and His110.

Belongs to the CISD protein family. CISD2 subfamily. [2Fe-2S] cluster serves as cofactor.

It localises to the endoplasmic reticulum membrane. The protein is CDGSH iron-sulfur domain-containing protein 2 homolog A of Branchiostoma floridae (Florida lancelet).